A 566-amino-acid chain; its full sequence is Proline--tRNA ligase (566 aa).

It belongs to the class-II aminoacyl-tRNA synthetase family. ProS type 1 subfamily. As to quaternary structure, homodimer.

Its subcellular location is the cytoplasm. The enzyme catalyses tRNA(Pro) + L-proline + ATP = L-prolyl-tRNA(Pro) + AMP + diphosphate. Catalyzes the attachment of proline to tRNA(Pro) in a two-step reaction: proline is first activated by ATP to form Pro-AMP and then transferred to the acceptor end of tRNA(Pro). As ProRS can inadvertently accommodate and process non-cognate amino acids such as alanine and cysteine, to avoid such errors it has two additional distinct editing activities against alanine. One activity is designated as 'pretransfer' editing and involves the tRNA(Pro)-independent hydrolysis of activated Ala-AMP. The other activity is designated 'posttransfer' editing and involves deacylation of mischarged Ala-tRNA(Pro). The misacylated Cys-tRNA(Pro) is not edited by ProRS. In Bacillus mycoides (strain KBAB4) (Bacillus weihenstephanensis), this protein is Proline--tRNA ligase.